A 296-amino-acid chain; its full sequence is Cyclin-dependent kinase 1 (296 aa).

Positions 5 to 288 (FQKLEKIGEG…AKNGLSHKYF (284 aa)) constitute a Protein kinase domain. Residues 11-19 (IGEGTYGVV) and Lys-34 contribute to the ATP site. Residue Asp-130 is the Proton acceptor of the active site.

This sequence belongs to the protein kinase superfamily. CMGC Ser/Thr protein kinase family. CDC2/CDKX subfamily.

The protein localises to the nucleus. It carries out the reaction L-seryl-[protein] + ATP = O-phospho-L-seryl-[protein] + ADP + H(+). The catalysed reaction is L-threonyl-[protein] + ATP = O-phospho-L-threonyl-[protein] + ADP + H(+). In terms of biological role, cyclin-dependent kinase that acts as a master regulator of the mitotic and meiotic cell cycles. The polypeptide is Cyclin-dependent kinase 1 (Encephalitozoon cuniculi (strain GB-M1) (Microsporidian parasite)).